The chain runs to 145 residues: Peptide methionine sulfoxide reductase MsrB (145 aa).

The 124-residue stretch at 6–129 (KNERLKQLTD…NSAALRFIPV (124 aa)) folds into the MsrB domain. C118 (nucleophile) is an active-site residue.

It belongs to the MsrB Met sulfoxide reductase family.

The catalysed reaction is L-methionyl-[protein] + [thioredoxin]-disulfide + H2O = L-methionyl-(R)-S-oxide-[protein] + [thioredoxin]-dithiol. This Listeria welshimeri serovar 6b (strain ATCC 35897 / DSM 20650 / CCUG 15529 / CIP 8149 / NCTC 11857 / SLCC 5334 / V8) protein is Peptide methionine sulfoxide reductase MsrB.